A 300-amino-acid chain; its full sequence is MSYRELVVELAREHAEALSDALLELGALSVSVEDADADTPDEQPLFGEPGLVPDRTAWQHSRVIALLSPDHEPAVLLAAAVNDIGVTETPKFDVREVEEQDWVRLTQSQFEPIPIGERIWVVPSWHDAPDPDALILELDPGLAFGTGSHPTTRLCMEWLEQSVKPGQSVLDYGCGSGILAILARKCGANPVVGIDIDPQAVESARQNSERNHAEVTYGLPDACPAGEFDIVVANILSNPLKLMASMLASKVKPGGRIALSGVLARQADEVAAVYARYVDISVWREHEGWVCLAGTRRESH.

Positions 152, 173, 195, and 234 each coordinate S-adenosyl-L-methionine.

It belongs to the methyltransferase superfamily. PrmA family.

It localises to the cytoplasm. It carries out the reaction L-lysyl-[protein] + 3 S-adenosyl-L-methionine = N(6),N(6),N(6)-trimethyl-L-lysyl-[protein] + 3 S-adenosyl-L-homocysteine + 3 H(+). Functionally, methylates ribosomal protein L11. The protein is Ribosomal protein L11 methyltransferase of Burkholderia ambifaria (strain MC40-6).